Consider the following 226-residue polypeptide: ATP synthase subunit a (226 aa).

5 consecutive transmembrane segments (helical) span residues 20-40, 74-94, 100-120, 158-180, and 197-217; these read LNWL…WLLP, FISL…PYIF, LTLT…YGWI, LAVR…GNTG, and IALL…FAVL.

This sequence belongs to the ATPase A chain family. As to quaternary structure, F-type ATPases have 2 components, CF(1) - the catalytic core - and CF(0) - the membrane proton channel. CF(1) has five subunits: alpha(3), beta(3), gamma(1), delta(1), epsilon(1). CF(0) has three main subunits: a, b and c.

It is found in the mitochondrion inner membrane. Functionally, mitochondrial membrane ATP synthase (F(1)F(0) ATP synthase or Complex V) produces ATP from ADP in the presence of a proton gradient across the membrane which is generated by electron transport complexes of the respiratory chain. F-type ATPases consist of two structural domains, F(1) - containing the extramembraneous catalytic core and F(0) - containing the membrane proton channel, linked together by a central stalk and a peripheral stalk. During catalysis, ATP synthesis in the catalytic domain of F(1) is coupled via a rotary mechanism of the central stalk subunits to proton translocation. Key component of the proton channel; it may play a direct role in the translocation of protons across the membrane. The chain is ATP synthase subunit a (ATP6) from Anopheles quadrimaculatus (Common malaria mosquito).